The sequence spans 474 residues: uncharacterized protein (474 aa).

A helical transmembrane segment spans residues 374–398 (GLICYLALFSISLMIENIIGLTISL).

The protein resides in the membrane. This is an uncharacterized protein from Borreliella burgdorferi (strain ATCC 35210 / DSM 4680 / CIP 102532 / B31) (Borrelia burgdorferi).